Reading from the N-terminus, the 160-residue chain is Tic20 family protein (160 aa).

The next 4 membrane-spanning stretches (helical) occupy residues 13–33 (FFSA…GGFL), 53–73 (FYYQ…MAVV), 87–107 (MQAI…AYVI), and 122–142 (NFAF…SVLG).

This sequence belongs to the Tic20 family.

Its subcellular location is the cell membrane. The protein is Tic20 family protein of Synechocystis sp. (strain ATCC 27184 / PCC 6803 / Kazusa).